Here is a 183-residue protein sequence, read N- to C-terminus: Ribosome rescue factor SmrB (183 aa).

A Smr domain is found at leucine 98–glutamate 173.

It belongs to the SmrB family. In terms of assembly, associates with collided ribosomes, but not with correctly translating polysomes.

Functionally, acts as a ribosome collision sensor. Detects stalled/collided disomes (pairs of ribosomes where the leading ribosome is stalled and a second ribosome has collided with it) and endonucleolytically cleaves mRNA at the 5' boundary of the stalled ribosome. Stalled/collided disomes form a new interface (primarily via the 30S subunits) that binds SmrB. Cleaved mRNA becomes available for tmRNA ligation, leading to ribosomal subunit dissociation and rescue of stalled ribosomes. This is Ribosome rescue factor SmrB from Shigella dysenteriae serotype 1 (strain Sd197).